Consider the following 441-residue polypeptide: Protein MONOCULM 1 (441 aa).

Residues M1–A33 form a disordered region. Residues S7–C20 are compositionally biased toward low complexity. Over residues K21–A33 the composition is skewed to gly residues. Residues R41 to Q437 enclose the GRAS domain. A leucine repeat I (LRI) region spans residues P48 to A126. A VHIID region spans residues Y127–G195. Positions V158–D162 match the VHIID motif. The leucine repeat II (LRII) stretch occupies residues R205 to T256. The tract at residues L266 to A361 is PFYRE. The tract at residues G364–Q437 is SAW.

This sequence belongs to the GRAS family. As to expression, expressed in a small number of epidermal or subepidermal cells at the leaf axils, in axillary meristems and the entire tiller buds. Undetected in the shoot apical meristem.

It is found in the nucleus. In terms of biological role, putative transcription regulator that controls rice tillering by initiating axillary buds and promoting their outgrowth. Rice tiller is a specialized grain-bearing branch that is formed on the unelongated basal internode and grows independently of the mother stem (culm) by means of its own adventitious roots. The polypeptide is Protein MONOCULM 1 (Oryza sativa subsp. japonica (Rice)).